We begin with the raw amino-acid sequence, 483 residues long: V-type proton ATPase subunit H (483 aa).

Serine 483 bears the Phosphoserine mark.

Belongs to the V-ATPase H subunit family. As to quaternary structure, V-ATPase is a heteromultimeric enzyme made up of two complexes: the ATP-hydrolytic V1 complex and the proton translocation V0 complex. The V1 complex consists of three catalytic AB heterodimers that form a heterohexamer, three peripheral stalks each consisting of EG heterodimers, one central rotor including subunits D and F, and the regulatory subunits C and H. The proton translocation complex V0 consists of the proton transport subunit a, a ring of proteolipid subunits c9c'', rotary subunit d, subunits e and f, and the accessory subunits ATP6AP1/Ac45 and ATP6AP2/PRR. Interacts with AP2M1. As to expression, expressed in brain (at protein level).

The protein localises to the cytoplasmic vesicle. It is found in the clathrin-coated vesicle membrane. Its function is as follows. Subunit of the V1 complex of vacuolar(H+)-ATPase (V-ATPase), a multisubunit enzyme composed of a peripheral complex (V1) that hydrolyzes ATP and a membrane integral complex (V0) that translocates protons. V-ATPase is responsible for acidifying and maintaining the pH of intracellular compartments and in some cell types, is targeted to the plasma membrane, where it is responsible for acidifying the extracellular environment. Subunit H is essential for V-ATPase activity, but not for the assembly of the complex. Involved in the endocytosis mediated by clathrin-coated pits, required for the formation of endosomes. The polypeptide is V-type proton ATPase subunit H (ATP6V1H) (Bos taurus (Bovine)).